A 210-amino-acid polypeptide reads, in one-letter code: MSGMFSGSISETSGMSLQCTKSAGHWKIVVWDEEGFQGRRHEFTAECPSVLELGFETVRSLKVLSGAWVGFEHAGFQGQQYVLERGEYPSWDAWSGNTSYPAERLTSFRPVACANHRDSRLTIFEQENFLGRKGELSDDYPSLQAMGWDGNEVGSFHVHSGAWVCSQFPGYRGFQYVLECDHHSGDYKHFREWGSHAQTFQVQSIRRIQQ.

An N-terminal arm region spans residues 1 to 25; the sequence is MSGMFSGSISETSGMSLQCTKSAGH. 2 Beta/gamma crystallin 'Greek key' domains span residues 26–65 and 66–112; these read WKIV…KVLS and GAWV…RPVA. The tract at residues 113–118 is connecting peptide; it reads CANHRD. 2 consecutive Beta/gamma crystallin 'Greek key' domains span residues 119-160 and 161-209; these read SRLT…HVHS and GAWV…RRIQ.

Belongs to the beta/gamma-crystallin family. As to quaternary structure, homo/heterodimer, or complexes of higher-order. The structure of beta-crystallin oligomers seems to be stabilized through interactions between the N-terminal arms.

In terms of biological role, crystallins are the dominant structural components of the vertebrate eye lens. The protein is Beta-crystallin A4 (CRYBA4) of Bos taurus (Bovine).